The primary structure comprises 244 residues: Methylthioribulose-1-phosphate dehydratase (244 aa).

C104 provides a ligand contact to substrate. The Zn(2+) site is built by H122 and H124. The active-site Proton donor/acceptor is the E148. H204 serves as a coordination point for Zn(2+).

Belongs to the aldolase class II family. MtnB subfamily. Zn(2+) serves as cofactor.

The protein resides in the cytoplasm. It carries out the reaction 5-(methylsulfanyl)-D-ribulose 1-phosphate = 5-methylsulfanyl-2,3-dioxopentyl phosphate + H2O. It participates in amino-acid biosynthesis; L-methionine biosynthesis via salvage pathway; L-methionine from S-methyl-5-thio-alpha-D-ribose 1-phosphate: step 2/6. Its function is as follows. Catalyzes the dehydration of methylthioribulose-1-phosphate (MTRu-1-P) into 2,3-diketo-5-methylthiopentyl-1-phosphate (DK-MTP-1-P). In Cryptococcus neoformans var. neoformans serotype D (strain B-3501A) (Filobasidiella neoformans), this protein is Methylthioribulose-1-phosphate dehydratase.